A 270-amino-acid polypeptide reads, in one-letter code: Putative phosphoenolpyruvate synthase regulatory protein (270 aa).

149-156 (GVSRSGKT) lines the ADP pocket.

The protein belongs to the pyruvate, phosphate/water dikinase regulatory protein family. PSRP subfamily.

The enzyme catalyses [pyruvate, water dikinase] + ADP = [pyruvate, water dikinase]-phosphate + AMP + H(+). It carries out the reaction [pyruvate, water dikinase]-phosphate + phosphate + H(+) = [pyruvate, water dikinase] + diphosphate. Functionally, bifunctional serine/threonine kinase and phosphorylase involved in the regulation of the phosphoenolpyruvate synthase (PEPS) by catalyzing its phosphorylation/dephosphorylation. This chain is Putative phosphoenolpyruvate synthase regulatory protein, found in Alteromonas mediterranea (strain DSM 17117 / CIP 110805 / LMG 28347 / Deep ecotype).